A 411-amino-acid chain; its full sequence is 2,3-bisphosphoglycerate-independent phosphoglycerate mutase (411 aa).

Belongs to the BPG-independent phosphoglycerate mutase family. A-PGAM subfamily.

It carries out the reaction (2R)-2-phosphoglycerate = (2R)-3-phosphoglycerate. It functions in the pathway carbohydrate degradation; glycolysis; pyruvate from D-glyceraldehyde 3-phosphate: step 3/5. Its function is as follows. Catalyzes the interconversion of 2-phosphoglycerate and 3-phosphoglycerate. In Pyrobaculum islandicum (strain DSM 4184 / JCM 9189 / GEO3), this protein is 2,3-bisphosphoglycerate-independent phosphoglycerate mutase.